Reading from the N-terminus, the 341-residue chain is MAALGHTLPFYTGTKPTFPMDTTLAVIITIFLTALVTFIIILPGIRGKTRLFWLLRVVTSLFIGAVILAVNFSSEWSVGHVNANTTYKAFSPKWVSVDVGLQIGLGGVNITLTGTPVQQLNETINYNEAFAWRLGRSYAEEYAKALEKGLPDPVLYLAEKFTPRSPCGLYNQYRLAGHYASAMLWVAFLCWLLANVMLSMPVLVYGGHMLLATGLFQLLALFFFSMTTSLISPCPLRLGTAVLHTHHGPAFWITLATGLLCILLGLVMAVAHRMQPHRLKAFFNQSSEDPVLEWGSEEGGLLSPHYRSIAESPETQDIPMSVASSETCFKEEHPKESDCSL.

At 1-24 (MAALGHTLPFYTGTKPTFPMDTTL) the chain is on the extracellular side. Residues 25 to 45 (AVIITIFLTALVTFIIILPGI) traverse the membrane as a helical segment. At 46–51 (RGKTRL) the chain is on the cytoplasmic side. The chain crosses the membrane as a helical span at residues 52-72 (FWLLRVVTSLFIGAVILAVNF). Residues 73–183 (SSEWSVGHVN…RLAGHYASAM (111 aa)) are Extracellular-facing. Asparagine 84, asparagine 109, and asparagine 121 each carry an N-linked (GlcNAc...) asparagine glycan. The helical transmembrane segment at 184–204 (LWVAFLCWLLANVMLSMPVLV) threads the bilayer. A topological domain (cytoplasmic) is located at residue tyrosine 205. Residues 206-226 (GGHMLLATGLFQLLALFFFSM) traverse the membrane as a helical segment. At 227 to 249 (TTSLISPCPLRLGTAVLHTHHGP) the chain is on the extracellular side. A helical transmembrane segment spans residues 250–270 (AFWITLATGLLCILLGLVMAV). The Cytoplasmic segment spans residues 271–341 (AHRMQPHRLK…EHPKESDCSL (71 aa)).

Belongs to the DUOXA family. May interact with NUMB.

The protein localises to the membrane. Its function is as follows. May be required for the maturation and the transport from the endoplasmic reticulum to the plasma membrane of functional DUOX1. This Mus musculus (Mouse) protein is Dual oxidase maturation factor 1 (Duoxa1).